The primary structure comprises 493 residues: UDP-N-acetylmuramoyl-L-alanyl-D-glutamate--2,6-diaminopimelate ligase (493 aa).

Serine 30 contacts UDP-N-acetyl-alpha-D-muramoyl-L-alanyl-D-glutamate. ATP is bound at residue 114–120 (GTNGKTS). UDP-N-acetyl-alpha-D-muramoyl-L-alanyl-D-glutamate contacts are provided by residues 156–157 (TT), serine 183, glutamine 189, and arginine 191. Lysine 223 carries the N6-carboxylysine modification. Residues arginine 386, 410-413 (DNPR), glycine 460, and glutamate 464 each bind meso-2,6-diaminopimelate. The Meso-diaminopimelate recognition motif signature appears at 410-413 (DNPR).

It belongs to the MurCDEF family. MurE subfamily. Mg(2+) is required as a cofactor. In terms of processing, carboxylation is probably crucial for Mg(2+) binding and, consequently, for the gamma-phosphate positioning of ATP.

It localises to the cytoplasm. It catalyses the reaction UDP-N-acetyl-alpha-D-muramoyl-L-alanyl-D-glutamate + meso-2,6-diaminopimelate + ATP = UDP-N-acetyl-alpha-D-muramoyl-L-alanyl-gamma-D-glutamyl-meso-2,6-diaminopimelate + ADP + phosphate + H(+). It functions in the pathway cell wall biogenesis; peptidoglycan biosynthesis. Its function is as follows. Catalyzes the addition of meso-diaminopimelic acid to the nucleotide precursor UDP-N-acetylmuramoyl-L-alanyl-D-glutamate (UMAG) in the biosynthesis of bacterial cell-wall peptidoglycan. This chain is UDP-N-acetylmuramoyl-L-alanyl-D-glutamate--2,6-diaminopimelate ligase, found in Chromobacterium violaceum (strain ATCC 12472 / DSM 30191 / JCM 1249 / CCUG 213 / NBRC 12614 / NCIMB 9131 / NCTC 9757 / MK).